The chain runs to 287 residues: ATP synthase gamma chain (287 aa).

This sequence belongs to the ATPase gamma chain family. In terms of assembly, F-type ATPases have 2 components, CF(1) - the catalytic core - and CF(0) - the membrane proton channel. CF(1) has five subunits: alpha(3), beta(3), gamma(1), delta(1), epsilon(1). CF(0) has three main subunits: a, b and c.

It is found in the cell inner membrane. Its function is as follows. Produces ATP from ADP in the presence of a proton gradient across the membrane. The gamma chain is believed to be important in regulating ATPase activity and the flow of protons through the CF(0) complex. The protein is ATP synthase gamma chain of Xanthomonas oryzae pv. oryzae (strain MAFF 311018).